Reading from the N-terminus, the 155-residue chain is Probable ribosome biogenesis protein RLP24 (155 aa).

This sequence belongs to the eukaryotic ribosomal protein eL24 family.

In Encephalitozoon cuniculi (strain GB-M1) (Microsporidian parasite), this protein is Probable ribosome biogenesis protein RLP24 (RPL24).